Reading from the N-terminus, the 597-residue chain is Cytosolic Fe-S cluster assembly factor NAR1 (597 aa).

Position 20 (cysteine 20) interacts with [4Fe-4S] cluster. The disordered stretch occupies residues 25–46 (ESLPQKESQSENPYEVTKEDKV). Residues cysteine 61, cysteine 64, cysteine 67, cysteine 208, and cysteine 263 each coordinate [4Fe-4S] cluster. A disordered region spans residues 422–448 (VSRLPGAKPQAVTSSANRRQPMSRNAA). The segment covering 432–444 (AVTSSANRRQPMS) has biased composition (polar residues). The [4Fe-4S] cluster site is built by cysteine 464 and cysteine 468.

This sequence belongs to the NARF family.

Its function is as follows. Component of the cytosolic Fe/S protein assembly machinery. Required for maturation of extramitochondrial Fe/S proteins. May play a role in the transfer of pre-assembled Fe/S clusters to target apoproteins. In Neosartorya fischeri (strain ATCC 1020 / DSM 3700 / CBS 544.65 / FGSC A1164 / JCM 1740 / NRRL 181 / WB 181) (Aspergillus fischerianus), this protein is Cytosolic Fe-S cluster assembly factor NAR1 (NAR1).